A 475-amino-acid polypeptide reads, in one-letter code: Ribulose bisphosphate carboxylase large chain (475 aa).

A propeptide spanning residues 1–2 is cleaved from the precursor; the sequence is MA. Pro3 is subject to N-acetylproline. Lys14 is subject to N6,N6,N6-trimethyllysine. Residues Asn123 and Thr173 each coordinate substrate. The active-site Proton acceptor is Lys175. Residue Lys177 participates in substrate binding. Residues Lys201, Asp203, and Glu204 each contribute to the Mg(2+) site. Position 201 is an N6-carboxylysine (Lys201). His294 serves as the catalytic Proton acceptor. Substrate-binding residues include Arg295, His327, and Ser379.

Belongs to the RuBisCO large chain family. Type I subfamily. In terms of assembly, heterohexadecamer of 8 large chains and 8 small chains; disulfide-linked. The disulfide link is formed within the large subunit homodimers. Requires Mg(2+) as cofactor. The disulfide bond which can form in the large chain dimeric partners within the hexadecamer appears to be associated with oxidative stress and protein turnover.

Its subcellular location is the plastid. The protein resides in the chloroplast. It carries out the reaction 2 (2R)-3-phosphoglycerate + 2 H(+) = D-ribulose 1,5-bisphosphate + CO2 + H2O. The enzyme catalyses D-ribulose 1,5-bisphosphate + O2 = 2-phosphoglycolate + (2R)-3-phosphoglycerate + 2 H(+). Functionally, ruBisCO catalyzes two reactions: the carboxylation of D-ribulose 1,5-bisphosphate, the primary event in carbon dioxide fixation, as well as the oxidative fragmentation of the pentose substrate in the photorespiration process. Both reactions occur simultaneously and in competition at the same active site. The protein is Ribulose bisphosphate carboxylase large chain of Oedogonium cardiacum (Filamentous green alga).